A 130-amino-acid chain; its full sequence is Small ribosomal subunit protein uS8 (130 aa).

This sequence belongs to the universal ribosomal protein uS8 family. Part of the 30S ribosomal subunit. Contacts proteins S5 and S12.

Its function is as follows. One of the primary rRNA binding proteins, it binds directly to 16S rRNA central domain where it helps coordinate assembly of the platform of the 30S subunit. This chain is Small ribosomal subunit protein uS8, found in Pectobacterium carotovorum subsp. carotovorum (strain PC1).